The chain runs to 229 residues: Ribosomal RNA small subunit methyltransferase G (229 aa).

S-adenosyl-L-methionine contacts are provided by residues Gly71, 122–123 (AE), and Arg139.

The protein belongs to the methyltransferase superfamily. RNA methyltransferase RsmG family.

The protein resides in the cytoplasm. Specifically methylates the N7 position of a guanine in 16S rRNA. This Thermotoga neapolitana (strain ATCC 49049 / DSM 4359 / NBRC 107923 / NS-E) protein is Ribosomal RNA small subunit methyltransferase G.